The primary structure comprises 549 residues: Zinc finger protein 18 (549 aa).

Positions R41 to P123 constitute an SCAN box domain. Residues D211 to R283 form the KRAB domain. 5 consecutive C2H2-type zinc fingers follow at residues P408–H430, F436–H458, C464–H486, Y492–H514, and Y520–H542.

It belongs to the krueppel C2H2-type zinc-finger protein family.

Its subcellular location is the nucleus. Functionally, may be involved in transcriptional regulation. This is Zinc finger protein 18 (ZNF18) from Homo sapiens (Human).